The primary structure comprises 275 residues: tRNA pseudouridine synthase A (275 aa).

Residue Asp62 is the Nucleophile of the active site. Position 124 (Tyr124) interacts with substrate.

This sequence belongs to the tRNA pseudouridine synthase TruA family. As to quaternary structure, homodimer.

It catalyses the reaction uridine(38/39/40) in tRNA = pseudouridine(38/39/40) in tRNA. Its function is as follows. Formation of pseudouridine at positions 38, 39 and 40 in the anticodon stem and loop of transfer RNAs. The sequence is that of tRNA pseudouridine synthase A from Herminiimonas arsenicoxydans.